The primary structure comprises 286 residues: Flagellin FlaB2 (286 aa).

Belongs to the bacterial flagellin family. The flagellum consists of an outer layer composed of repeating units of FlaA around a core that contains several antigenically related polypeptides. Interacts with FliW; a synthetic peptide of FlaB1 (residues 229-247) partially blocks binding of this protein to FliW.

It localises to the periplasmic flagellum. It is found in the periplasm. In terms of biological role, component of the core of the flagella. The chain is Flagellin FlaB2 from Treponema pallidum (strain Nichols).